A 308-amino-acid polypeptide reads, in one-letter code: Olfactory receptor 5H8 (308 aa).

The Extracellular segment spans residues 1-28 (MDDENATLLTEFVLTGLTYQSEWKIPLF). A helical transmembrane segment spans residues 29–49 (LAFLVIYLITIMANLGLIAVI). The Cytoplasmic portion of the chain corresponds to 50 to 56 (WKDSHLH). A helical membrane pass occupies residues 57–77 (IPMYLFLGSLAFVDAWLSSSV). Residues 78 to 98 (TPKMLISFLAKSMIISVSECK) lie on the Extracellular side of the membrane. A disulfide bond links C97 and C179. Residues 99-119 (IQFFSFGISGTTECFLLATMA) traverse the membrane as a helical segment. Residues 120 to 133 (YDRYVAICKPLLYP) are Cytoplasmic-facing. The helical transmembrane segment at 134–154 (VIMTNGLCIWLLVLSFIGGFL) threads the bilayer. The Extracellular segment spans residues 155–195 (HALIHEGILFRLTFCNSNIIHHFYCDIIPLLKISCTDPSIN). Residues 196–216 (FLMLFILSGSIQVFTILTVLV) form a helical membrane-spanning segment. Residues 217 to 238 (SYTFVLFTILKKKAKDIRKAFS) are Cytoplasmic-facing. A helical membrane pass occupies residues 239 to 259 (TCGAHLLSVSLYYGPLLFMYV). Topologically, residues 260–270 (HPASPQADDQD) are extracellular. A helical transmembrane segment spans residues 271–291 (MVESLFYTVIIPFLNPIIYSL). Residues 292 to 308 (RNKQVIDSLTKTLKGNV) are Cytoplasmic-facing.

The protein belongs to the G-protein coupled receptor 1 family.

The protein localises to the cell membrane. Functionally, odorant receptor. This chain is Olfactory receptor 5H8, found in Homo sapiens (Human).